The chain runs to 453 residues: Trigger factor (453 aa).

Residues 171 to 256 (GDRVTVSFKG…ATKVEAPQDV (86 aa)) form the PPIase FKBP-type domain.

Belongs to the FKBP-type PPIase family. Tig subfamily.

Its subcellular location is the cytoplasm. The catalysed reaction is [protein]-peptidylproline (omega=180) = [protein]-peptidylproline (omega=0). Functionally, involved in protein export. Acts as a chaperone by maintaining the newly synthesized protein in an open conformation. Functions as a peptidyl-prolyl cis-trans isomerase. The protein is Trigger factor of Rhodopseudomonas palustris (strain BisB5).